Reading from the N-terminus, the 256-residue chain is Rano class II histocompatibility antigen, B alpha chain (256 aa).

A signal peptide spans 1-23; that stretch reads MPLSRALILGVLALTTMLSPCGG. Positions 24–111 are alpha-1; it reads QDDIEADHVG…KRSNSTPAVN (88 aa). At 24–218 the chain is on the extracellular side; the sequence is QDDIEADHVG…IPAPMSELTE (195 aa). The Ig-like C1-type domain occupies 108–206; it reads PAVNEVPEAT…LDEPVLRHWE (99 aa). Residues 112–205 form an alpha-2 region; it reads EVPEATVFSK…SLDEPVLRHW (94 aa). C134 and C190 are joined by a disulfide. N145 is a glycosylation site (N-linked (GlcNAc...) asparagine). A connecting peptide region spans residues 206-218; sequence EPEIPAPMSELTE. A helical membrane pass occupies residues 219 to 244; that stretch reads TVVCALGLSVGLVGIVVGTIFIIQGL. Over 245–256 the chain is Cytoplasmic; sequence RSVAPSRHPGPL.

The protein belongs to the MHC class II family.

It is found in the membrane. The sequence is that of Rano class II histocompatibility antigen, B alpha chain (RT1-Ba) from Rattus norvegicus (Rat).